Reading from the N-terminus, the 122-residue chain is Large ribosomal subunit protein bL12 (122 aa).

This sequence belongs to the bacterial ribosomal protein bL12 family. In terms of assembly, homodimer. Part of the ribosomal stalk of the 50S ribosomal subunit. Forms a multimeric L10(L12)X complex, where L10 forms an elongated spine to which 2 to 4 L12 dimers bind in a sequential fashion. Binds GTP-bound translation factors.

Functionally, forms part of the ribosomal stalk which helps the ribosome interact with GTP-bound translation factors. Is thus essential for accurate translation. In Mycoplasma mycoides subsp. mycoides SC (strain CCUG 32753 / NCTC 10114 / PG1), this protein is Large ribosomal subunit protein bL12.